Here is an 822-residue protein sequence, read N- to C-terminus: Putative ESX-1 scaffolding and assembly protein SaeB (822 aa).

Its function is as follows. May be involved in assembly of the ESX-1 / type VII specialized secretion system (T7SS), which exports several proteins including EsxA and EsxB. Involved in DNA conjugation in recipient (MKD8) but not donor (mc(2)155) strain. The protein is Putative ESX-1 scaffolding and assembly protein SaeB (saeB) of Mycolicibacterium smegmatis (strain MKD8) (Mycobacterium smegmatis).